The primary structure comprises 218 residues: Transmembrane gamma-carboxyglutamic acid protein 1 (218 aa).

The propeptide occupies 1–20; that stretch reads MGRVFLTGEKANSILKRYPR. The Gla domain occupies 21–66; sequence ANGFFEEIRQGNIERECKEEFCTFEEAREAFENNEKTKEFWSTYTK. Topologically, residues 21–83 are extracellular; that stretch reads ANGFFEEIRQ…RGSDWFQFYL (63 aa). Cys37 and Cys42 are oxidised to a cystine. A helical membrane pass occupies residues 84–106; sequence TFPLIFGLFIILLVIFLIWRCFL. At 107 to 218 the chain is on the cytoplasmic side; that stretch reads RNKTRRQTVT…PMVPVVTTIK (112 aa). Residues 161–195 form a disordered region; it reads TRLSNCDPPPTYEEATGQVNLQRSETEPHLDPPPE.

Post-translationally, gla residues are produced after subsequent post-translational modifications of glutamate by a vitamin K-dependent gamma-carboxylase. In terms of tissue distribution, highly expressed in the spinal cord.

It is found in the membrane. The polypeptide is Transmembrane gamma-carboxyglutamic acid protein 1 (PRRG1) (Homo sapiens (Human)).